Here is a 444-residue protein sequence, read N- to C-terminus: Ribosomal protein uS12 methylthiotransferase RimO (444 aa).

One can recognise an MTTase N-terminal domain in the interval 4 to 120 (KSAALVSLGC…LKSFIRDHEA (117 aa)). [4Fe-4S] cluster-binding residues include Cys-13, Cys-49, Cys-83, Cys-157, Cys-161, and Cys-164. The Radical SAM core domain maps to 143–371 (VEGRSSAYVK…LELQRGISRR (229 aa)). Residues 374–442 (ESLVGRVLPV…DYDVEAELLS (69 aa)) form the TRAM domain.

Belongs to the methylthiotransferase family. RimO subfamily. Requires [4Fe-4S] cluster as cofactor.

It localises to the cytoplasm. The enzyme catalyses L-aspartate(89)-[ribosomal protein uS12]-hydrogen + (sulfur carrier)-SH + AH2 + 2 S-adenosyl-L-methionine = 3-methylsulfanyl-L-aspartate(89)-[ribosomal protein uS12]-hydrogen + (sulfur carrier)-H + 5'-deoxyadenosine + L-methionine + A + S-adenosyl-L-homocysteine + 2 H(+). Catalyzes the methylthiolation of an aspartic acid residue of ribosomal protein uS12. The protein is Ribosomal protein uS12 methylthiotransferase RimO of Syntrophobacter fumaroxidans (strain DSM 10017 / MPOB).